The chain runs to 1076 residues: JmjC domain-containing histone demethylation protein 1 (1076 aa).

Residues 93 to 265 (FSQTPLEDLV…TQLRVYQVEN (173 aa)) form the JmjC domain. Residue threonine 159 participates in substrate binding. Positions 162 and 164 each coordinate Fe cation. Position 179 (lysine 179) interacts with substrate. Histidine 233 lines the Fe cation pocket. Disordered stretches follow at residues 598–748 (FEEE…DPVV) and 789–1056 (KIEP…KIPS). Residues 610–634 (DQEEEEYDAEEPEDQEEEEEDEYQA) are compositionally biased toward acidic residues. Residues 653 to 680 (AKNDESEEVSVKKDKKEKMEKVEKDEKR) are compositionally biased toward basic and acidic residues. The span at 681–698 (RNSKSKKDKISKEKKKKE) shows a compositional bias: basic residues. Composition is skewed to basic and acidic residues over residues 699–714 (RERI…ELRA) and 789–811 (KIEP…EPEH). A compositionally biased stretch (low complexity) spans 935–946 (ASAPSSRHSSIS). 2 stretches are compositionally biased toward polar residues: residues 957 to 990 (FNSS…SINR) and 1004 to 1019 (DSLS…TYPT). The span at 1044–1056 (QHHDDGHKHKIPS) shows a compositional bias: basic and acidic residues.

Belongs to the JHDM1 histone demethylase family. Requires Fe(2+) as cofactor.

The protein localises to the nucleus. The enzyme catalyses N(6),N(6)-dimethyl-L-lysyl(36)-[histone H3] + 2 2-oxoglutarate + 2 O2 = L-lysyl(36)-[histone H3] + 2 formaldehyde + 2 succinate + 2 CO2. Histone demethylase that specifically demethylates 'Lys-36' of histone H3, thereby playing a central role in histone code. Has a role in regulating lifespan. The chain is JmjC domain-containing histone demethylation protein 1 (jhdm-1) from Caenorhabditis elegans.